The primary structure comprises 145 residues: Partner of bursicon (145 aa).

The first 28 residues, 1–28 (MKENFSIMFIHSIFLILIIFIYSNETIA), serve as a signal peptide directing secretion. 5 disulfide bridges follow: Cys36-Cys94, Cys60-Cys109, Cys69-Cys135, Cys73-Cys137, and Cys91-Cys140. Residues 36–131 (CETLQSEVHI…NGVMEIKIRE (96 aa)) enclose the CTCK domain.

In terms of assembly, heterodimer of burs and pburs.

It localises to the secreted. Final heterodimeric neurohormone released at the end of the molting cycle, involved in the sclerotization (tanning) of the insect cuticle, melanization and wing spreading. In Apis mellifera (Honeybee), this protein is Partner of bursicon (pburs).